The sequence spans 483 residues: MILPLILVLYLLSTAAYRLWLHPLRNYPGPCWWAVWRVPYLKGTIRGTIVRDIQRLHNQYGPVVRIAPDELSYITPEAAKPIYTSSPEFPKDPMHLPPFHNGAPGILAADYAHHRRYRRLLASAFSEKGLRAQQGMIQSHIDRLMTRLQGNCSSGSLDMTVWFNWATFDIIGDLAFGEPFGCLERMETNPWIASIQGNVKSIPILNALRRYRLDRLIEFLAPPRLLEMRRRNAQFTAEKVDRRLKHATTTRGDLWDSVLADPPDGEPPMSRAEMVSNASAIVLAGSETSATTLSGCLWLLLTNPEYLQQLTERIRARFSTATVIDAQTVTQIQGLQAVLDESLRLYPAVPMQSNRIVPPPGARLAGSWVPGGTSVAVQQFAACRSPTNFHRPDEFIPERWEKEGEFINDRREASQPFSIGPRNCIGRQLALAEMRLILVHLLWHFDIELDRRRMENMDWMAVQGIWILWDKKPLWVVLKNRST.

A heme-binding site is contributed by Cys-424.

It belongs to the cytochrome P450 family. Heme serves as cofactor.

It participates in mycotoxin biosynthesis; sterigmatocystin biosynthesis. In terms of biological role, cytochrome P450 monooxygenase; part of the gene cluster that mediates the biosynthesis of sterigmatocystin (ST), a polyketide-derived furanocoumarin which is part of the most toxic and carcinogenic compounds among the known mycotoxins. The first step in the biosynthesis of sterigmatocystin is the production of hexanoate by the fatty acid synthase (FAS) units stcJ and stcK. The polyketide backbone is assembled by the non-reducing polyketide synthase stcA by condensation of the starter hexanoyl-CoA and 7 malonyl-CoA extender units followed by cyclization and release of norsolorinic acid. Norsolorinic acid is the first stable intermediate in the biosynthesis of sterigmatocystin and is converted into averantin (AVN) by the ketoreductase stcE which reduces the hexanoate ketone to an alcohol. Averantin is then oxidized into 5'-hydroxyaverantin (HAVN) by the cytochrome P450 monooxygenase stcF. 5'-hydroxyaverantin is further converted to 5'-oxyaverantin (OAVN) by the 5'-hydroxyaverantin dehydrogenase stcG. The next step is the conversion of OAVN into averufin (AVF) which is catalyzed by a yet to be identified enzyme. The cytochrome P450 monooxygenase stcB and the flavin-binding monooxygenase stcW are both required for the conversion of averufin to 1-hydroxyversicolorone. The esterase stcI probably catalyzes the formation of versiconal hemiacetal acetate from 1-hydroxyversicolorone. The oxydoreductase stcN then probably catalyzes the biosynthetic step from versiconal to versicolorin B (VERB). The next step is performed by the versicolorin B desaturase stcL to produce versicolorin A (VERA). The ketoreductase stcU and the cytochrome P450 monooxygenase stcS are involved in the conversion of versicolorin A to demethylsterigmatocystin. The Baeyer-Villiger oxidas stcQ and the reductase stcR might be involved in the biosynthetic step from versicolorin A to demethylsterigmatocystin. The final step in the biosynthesis of sterigmatocystin is the methylation of demethylsterigmatocystin catalyzed by the methyltransferase stcP. The polypeptide is Cytochrome P450 monooxygenase stcF (Emericella nidulans (strain FGSC A4 / ATCC 38163 / CBS 112.46 / NRRL 194 / M139) (Aspergillus nidulans)).